The chain runs to 362 residues: S-adenosylmethionine decarboxylase proenzyme (362 aa).

Catalysis depends on residues Glu11 and Glu14. Ser71 (schiff-base intermediate with substrate; via pyruvic acid) is an active-site residue. Residue Ser71 is modified to Pyruvic acid (Ser); by autocatalysis. The Proton donor; for catalytic activity role is filled by Cys85. Active-site proton acceptor; for processing activity residues include Ser234 and His247.

It belongs to the eukaryotic AdoMetDC family. It depends on pyruvate as a cofactor. Post-translationally, is synthesized initially as an inactive proenzyme. Formation of the active enzyme involves a self-maturation process in which the active site pyruvoyl group is generated from an internal serine residue via an autocatalytic post-translational modification. Two non-identical subunits are generated from the proenzyme in this reaction, and the pyruvate is formed at the N-terminus of the alpha chain, which is derived from the carboxyl end of the proenzyme. The post-translation cleavage follows an unusual pathway, termed non-hydrolytic serinolysis, in which the side chain hydroxyl group of the serine supplies its oxygen atom to form the C-terminus of the beta chain, while the remainder of the serine residue undergoes an oxidative deamination to produce ammonia and the pyruvoyl group blocking the N-terminus of the alpha chain.

It catalyses the reaction S-adenosyl-L-methionine + H(+) = S-adenosyl 3-(methylsulfanyl)propylamine + CO2. It functions in the pathway amine and polyamine biosynthesis; S-adenosylmethioninamine biosynthesis; S-adenosylmethioninamine from S-adenosyl-L-methionine: step 1/1. This is S-adenosylmethionine decarboxylase proenzyme (SAMDC) from Ipomoea nil (Japanese morning glory).